The primary structure comprises 366 residues: DNA-directed RNA polymerase II subunit GRINL1A (366 aa).

Positions 1–23 (MFSLPRGFEPPAPEDLGRQSSAE) are disordered. Positions 15–39 (DLGRQSSAELRERLRRQERLLRNEK) form a coiled coil. The tract at residues 29 to 68 (RRQERLLRNEKFICKLPDKGKKISDTVAKLKAAISEREEV) is important for transcription repressor activity. Disordered regions lie at residues 88 to 140 (ATTR…HRGN), 158 to 182 (IRAR…QEEE), 201 to 225 (ADQS…ETPK), and 237 to 280 (ARNP…RRAR). A compositionally biased stretch (basic and acidic residues) spans 90–100 (TRADTDVDKAQ). Residues 101-127 (SSDLMLDTSSLDPDCSSIDIKSSKSTS) show a composition bias toward low complexity. Positions 225–296 (KKPHYMKVLE…TAARLLPLHH (72 aa)) are interaction with Pol II. Over residues 251 to 272 (VLPTQQSDSPSHCQRGQSPASS) the composition is skewed to polar residues. Serine 268 is subject to Phosphoserine. An important for transcription repressor activity region spans residues 297–312 (LPAQLLSIEESLALQR). Positions 299-333 (AQLLSIEESLALQREQKQNYEEMQAKLAAQKLAER) form a coiled coil. The interval 313–338 (EQKQNYEEMQAKLAAQKLAERLNIKM) is interaction with Pol II. Residues 338-366 (MQSYNPEGESSGRYREVRDEADAQSSDEC) form a disordered region. The segment covering 347 to 358 (SSGRYREVRDEA) has biased composition (basic and acidic residues).

This sequence belongs to the GRINL1 family. Component of the Pol II(G) complex, which contains the RNA polymerase II (Pol II) core complex subunits and POLR2M isoform 1. Pol II(G) appears to be an abundant form of Pol II. Dephosphorylated at Ser-268 by the PNUTS-PP1 complex, promoting RNA polymerase II transcription pause-release.

It localises to the nucleus. Functionally, appears to be a stable component of the Pol II(G) complex form of RNA polymerase II (Pol II). Pol II synthesizes mRNA precursors and many functional non-coding RNAs and is the central component of the basal RNA polymerase II transcription machinery. May play a role in the Mediator complex-dependent regulation of transcription activation. Acts as a negative regulator of transcriptional activation; this repression is relieved by the Mediator complex, which restores Pol II(G) activator-dependent transcription to a level equivalent to that of Pol II. The sequence is that of DNA-directed RNA polymerase II subunit GRINL1A (Polr2m) from Mus musculus (Mouse).